A 2207-amino-acid chain; its full sequence is MGAQVSSQKVGAHENSNRAYGGSTINYTTINYYRDSASNAASKQDFAQDPSKFTEPIKDVLIKTAPTLNSPNIEACGYSDRVMQLTLGNSTITTQEAANSVVAYGRWPEYIKDSEANPVDQPTEPDVAACRFYTLDTVTWRKESRGWWWKLPDALKDMGLFGQNMFYHYLGRAGYTVHVQCNASKFHQGALGVFAVPEMCLAGDSTTHMFTKYENANPGEKGGEFKGSFTLDTNATNPARNFCPVDYLFGSGVLAGNAFVYPHQIINLRTNNCATLVLPYVNSLSIDSMTKHNNWGIAILPLAPLDFATESSTEIPITLTIAPMCCEFNGLRNITVPRTQGLPVLNTPGSNQYLTADNYQSPCAIPEFDVTPPIDIPGEVRNMMELAEIDTMIPLNLTNQRKNTMDMYRVELNDAAHSDTPILCLSLSPASDPRLAHTMLGEILNYYTHWAGSLKFTFLFCGSMMATGKLLVSYAPPGAEAPKSRKEAMLGTHVIWDIGLQSSCTMVVPWISNTTYRQTINDSFTEGGYISMFYQTRVVVPLSTPRKMDILGFVSACNDFSVRLLRDTTHISQEAMPQGLGDLIEGVVEGVTRNALTPLTPANNLPDTQSSGPAHSKETPALTAVETGATNPLVPSDTVQTRHVIQKRTRSESTVESFFARGACVAIIEVDNDAPTKRASKLFSVWKITYKDTVQLRRKLEFFTYSRFDMEFTFVVTSNYTDANNGHALNQVYQIMYIPPGAPIPGKWNDYTWQTSSNPSVFYTYGAPPARISVPYVGIANAYSHFYDGFAKVPLAGQASTEGDSLYGAASLNDFGSLAVRVVNDHNPTKLTSKIRVYMKPKHVRVWCPRPPRAVPYYGPGVDYKDGLAPLPGKGLTTYGFGHQNKAVYTAGYKICNYHLATQEDLQNAVNIMWIRDLLVVESKAQGIDSIARCNCHTGVYYCESRRKYYPVSFTGPTFQYMEANEYYPARYQSHMLIGHGFASPGDCGGILRCQHGVIGIITAGGEGLVAFSDIRDLYAYEEEAMEQGVSNYIESLGAAFGSGFTQQIGNKISELTSMVTSTITEKLLKNLIKIISSLVIITRNYEDTTTVLATLALLGCDASPWQWLKKKACDILEIPYIMRQGDSWLKKFTEACNAAKGLEWVSNKISKFIDWLKEKIIPQARDKLEFVTKLKQLEMLENQIATIHQSCPSQEHQEILFNNVRWLSIQSKRFAPLYAVEAKRIQKLEHTINNYVQFKSKHRIEPVCLLVHGSPGTGKSVATNLIARAIAEKENTSTYSLPPDPSHFDGYKQQGVVIMDDLNQNPDGADMKLFCQMVSTVEFIPPMASLEEKGILFTSNYVLASTNSSRITPPTVAHSDALARRFAFDMDIQIMSEYSRDGKLNMAMATEMCKNCHHPANFKRCCPLVCGKAIQLMDKSSRVRYSIDQITTMIINERNRRSSIGNCMEALFQGPLQYKDLKIDIKTTPPPECINDLLQAVDSQEVRDYCEKKGWIVDITSQVQTERNINRAMTILQAVTTFAAVAGVVYVMYKLFAGHQGAYTGLPNKRPNVPTIRTAKVQGPGFDYAVAMAKRNILTATTIKGEFTMLGVHDNVAILPTHASPGETIVIDGKEVEVLDAKALEDQAGTNLEITIVTLKRNEKFRDIRPHIPTQITETNDGVLIVNTSKYPNMYVPVGAVTEQGYLNLSGRQTARTLMYNFPTRAGQCGGVITCTGKVIGMHVGGNGSHGFAAALKRSYFTQSQGEIQWMRPSKEVGYPVINAPSKTKLEPSAFHYVFEGVKEPAVLTKSDPRLKTDFEEAIFSKYVGNKITEVDEYMKEAVDHYAGQLMSLDINTEQMCLEDAMYGTDGLEALDLSTSAGYPYVAMGKKKRDILNKQTRDTKEMQRLLDTYGINLPLVTYVKDELRSKTKVEQGKSRLIEASSLNDSVAMRMAFGNLYAAFHKNPGVVTGSAVGCDPDLFWSKIPVLMEEKLFAFDYTGYDASLSPAWFEALKMVLEKIGFGDRVDYIDYLNHSHHLYKNKTYCVKGGMPSGCSGTSIFNSMINNLIIRTLLLKTYKGIDLDHLKMIAYGDDVIASYPHEVDASLLAQSGKDYGLTMTPADKSATFETVTWENVTFLKRFFRADEKYPFLVHPVMPMKEIHESIRWTKDPRNTQDHVRSLCLLAWHNGEEEYNKFLAKIRSVPIGRALLLPEYSTLYRRWLDSF.

Gly2 carries the N-myristoyl glycine; by host lipid modification. Over 2–1518 (GAQVSSQKVG…NINRAMTILQ (1517 aa)) the chain is Cytoplasmic. The tract at residues 579–599 (GLGDLIEGVVEGVTRNALTPL) is amphipathic alpha-helix. Polar residues predominate over residues 597–613 (TPLTPANNLPDTQSSGP). 2 disordered regions span residues 597–620 (TPLT…KETP) and 628–647 (GATN…VIQK). Active-site for protease 2A activity residues include His899 and Asp917. Residues Cys934 and Cys936 each coordinate Zn(2+). Cys988 serves as the catalytic For protease 2A activity. Cys994 and His996 together coordinate Zn(2+). The tract at residues 1126–1198 (GDSWLKKFTE…HQSCPSQEHQ (73 aa)) is membrane-binding. Positions 1126-1264 (GDSWLKKFTE…SPGTGKSVAT (139 aa)) are oligomerization. The RNA-binding stretch occupies residues 1147–1151 (SNKIS). Positions 1230 to 1386 (EHTINNYVQF…SEYSRDGKLN (157 aa)) constitute an SF3 helicase domain. Position 1254-1261 (1254-1261 (GSPGTGKS)) interacts with ATP. Positions 1394, 1397, 1406, and 1411 each coordinate Zn(2+). A C4-type zinc finger spans residues 1394-1411 (CKNCHHPANFKRCCPLVC). Positions 1438–1445 (ERNRRSSI) are RNA-binding. An oligomerization region spans residues 1449–1454 (MEALFQ). The stretch at 1519–1534 (AVTTFAAVAGVVYVMY) is an intramembrane region. Topologically, residues 1535 to 2207 (KLFAGHQGAY…TLYRRWLDSF (673 aa)) are cytoplasmic. An O-(5'-phospho-RNA)-tyrosine modification is found at Tyr1544. Positions 1564–1742 (GPGFDYAVAM…FAAALKRSYF (179 aa)) constitute a Peptidase C3 domain. Residues His1603, Glu1634, and Cys1710 each act as for protease 3C activity in the active site. The 116-residue stretch at 1973 to 2088 (EKLFAFDYTG…SYPHEVDASL (116 aa)) folds into the RdRp catalytic domain. The Mg(2+) site is built by Asp1979 and Asp2074.

This sequence belongs to the picornaviruses polyprotein family. As to quaternary structure, interacts with capsid protein VP1 and capsid protein VP3 to form heterotrimeric protomers. In terms of assembly, interacts with capsid protein VP0, and capsid protein VP3 to form heterotrimeric protomers. Interacts with human PVR. Five protomers subsequently associate to form pentamers which serve as building blocks for the capsid. Interacts with capsid protein VP2, capsid protein VP3 and capsid protein VP4 following cleavage of capsid protein VP0. Interacts with capsid protein VP1 and capsid protein VP3 in the mature capsid. As to quaternary structure, interacts with capsid protein VP0 and capsid protein VP1 to form heterotrimeric protomers. Five protomers subsequently associate to form pentamers which serve as building blocks for the capsid. Interacts with capsid protein VP4 in the mature capsid. Interacts with protein 2C; this interaction may be important for virion morphogenesis. In terms of assembly, interacts with capsid protein VP1 and capsid protein VP3. Homodimer. As to quaternary structure, homohexamer; forms a hexameric ring structure with 6-fold symmetry characteristic of AAA+ ATPases. Interacts (via N-terminus) with host RTN3 (via reticulon domain); this interaction is important for viral replication. Interacts with capsid protein VP3; this interaction may be important for virion morphogenesis. In terms of assembly, interacts with protein 3CD. Homodimer. Interacts with host GBF1. Interacts (via GOLD domain) with host ACBD3 (via GOLD domain); this interaction allows the formation of a viral protein 3A/ACBD3 heterotetramer with a 2:2 stoichiometry, which will stimulate the recruitment of host PI4KB in order to synthesize PI4P at the viral RNA replication sites. As to quaternary structure, interacts with RNA-directed RNA polymerase. In terms of assembly, interacts with protein 3AB and with RNA-directed RNA polymerase. Interacts with Viral protein genome-linked and with protein 3CD. The cofactor is Mg(2+). Post-translationally, specific enzymatic cleavages in vivo by the viral proteases yield processing intermediates and the mature proteins. In terms of processing, myristoylation is required for the formation of pentamers during virus assembly. Further assembly of 12 pentamers and a molecule of genomic RNA generates the provirion. During virion maturation, immature virions are rendered infectious following cleavage of VP0 into VP4 and VP2. This maturation seems to be an autocatalytic event triggered by the presence of RNA in the capsid and it is followed by a conformational change infectious virion. Post-translationally, myristoylation is required during RNA encapsidation and formation of the mature virus particle. In terms of processing, VPg is uridylylated by the polymerase into VPg-pUpU. This acts as a nucleotide-peptide primer for the genomic RNA replication.

The protein resides in the virion. The protein localises to the host cytoplasm. Its subcellular location is the host cytoplasmic vesicle membrane. It localises to the host nucleus. The enzyme catalyses a ribonucleoside 5'-triphosphate + H2O = a ribonucleoside 5'-diphosphate + phosphate + H(+). It catalyses the reaction Selective cleavage of Tyr-|-Gly bond in the picornavirus polyprotein.. It carries out the reaction RNA(n) + a ribonucleoside 5'-triphosphate = RNA(n+1) + diphosphate. The catalysed reaction is Selective cleavage of Gln-|-Gly bond in the poliovirus polyprotein. In other picornavirus reactions Glu may be substituted for Gln, and Ser or Thr for Gly.. Its activity is regulated as follows. Replication or transcription is subject to high level of random mutations by the nucleotide analog ribavirin. Forms an icosahedral capsid of pseudo T=3 symmetry with capsid proteins VP2 and VP3. The capsid is 300 Angstroms in diameter, composed of 60 copies of each capsid protein and enclosing the viral positive strand RNA genome. Capsid protein VP1 mainly forms the vertices of the capsid. Capsid protein VP1 interacts with host cell receptor PVR to provide virion attachment to target host cells. This attachment induces virion internalization predominantly through clathrin- and caveolin-independent endocytosis in Hela cells and through caveolin-mediated endocytosis in brain microvascular endothelial cells. Tyrosine kinases are probably involved in the entry process. Virus binding to PVR induces increased junctional permeability and rearrangement of junctional proteins. Modulation of endothelial tight junctions, as well as cytolytic infection of endothelial cells themselves, may result in loss of endothelial integrity which may help the virus to reach the CNS. After binding to its receptor, the capsid undergoes conformational changes. Capsid protein VP1 N-terminus (that contains an amphipathic alpha-helix) and capsid protein VP4 are externalized. Together, they shape a pore in the host membrane through which viral genome is translocated to host cell cytoplasm. In terms of biological role, forms an icosahedral capsid of pseudo T=3 symmetry with capsid proteins VP2 and VP3. The capsid is 300 Angstroms in diameter, composed of 60 copies of each capsid protein and enclosing the viral positive strand RNA genome. Its function is as follows. Lies on the inner surface of the capsid shell. After binding to the host receptor, the capsid undergoes conformational changes. Capsid protein VP4 is released, Capsid protein VP1 N-terminus is externalized, and together, they shape a pore in the host membrane through which the viral genome is translocated into the host cell cytoplasm. Functionally, component of immature procapsids, which is cleaved into capsid proteins VP4 and VP2 after maturation. Allows the capsid to remain inactive before the maturation step. Cysteine protease that cleaves viral polyprotein and specific host proteins. It is responsible for the autocatalytic cleavage between the P1 and P2 regions, which is the first cleavage occurring in the polyprotein. Also cleaves the host translation initiation factor EIF4G1, in order to shut down the capped cellular mRNA translation. Inhibits the host nucleus-cytoplasm protein and RNA trafficking by cleaving host members of the nuclear pores including NUP98, NUP62 and NUP153. Counteracts stress granule formation probably by antagonizing its assembly or promoting its dissassembly. Cleaves and inhibits host IFIH1/MDA5, thereby inhibiting the type-I IFN production and the establishment of the antiviral state. Cleaves and inhibits host MAVS, thereby inhibiting the type-I IFN production and the establishment of the antiviral state. In terms of biological role, plays an essential role in the virus replication cycle by acting as a viroporin. Creates a pore in the host endoplasmic reticulum and as a consequence releases Ca2+ in the cytoplasm of infected cell. In turn, high levels of cytoplasmic calcium may trigger membrane trafficking and transport of viral ER-associated proteins to viroplasms, sites of viral genome replication. Its function is as follows. Induces and associates with structural rearrangements of intracellular membranes. Displays RNA-binding, nucleotide binding and NTPase activities. May play a role in virion morphogenesis and viral RNA encapsidation by interacting with the capsid protein VP3. Functionally, localizes the viral replication complex to the surface of membranous vesicles. Together with protein 3CD binds the Cis-Active RNA Element (CRE) which is involved in RNA synthesis initiation. Acts as a cofactor to stimulate the activity of 3D polymerase, maybe through a nucleid acid chaperone activity. Localizes the viral replication complex to the surface of membranous vesicles. It inhibits host cell endoplasmic reticulum-to-Golgi apparatus transport and causes the disassembly of the Golgi complex, possibly through GBF1 interaction. This would result in depletion of MHC, trail receptors and IFN receptors at the host cell surface. Plays an essential role in viral RNA replication by recruiting ACBD3 and PI4KB at the viral replication sites, thereby allowing the formation of the rearranged membranous structures where viral replication takes place. In terms of biological role, acts as a primer for viral RNA replication and remains covalently bound to viral genomic RNA. VPg is uridylylated prior to priming replication into VPg-pUpU. The oriI viral genomic sequence may act as a template for this. The VPg-pUpU is then used as primer on the genomic RNA poly(A) by the RNA-dependent RNA polymerase to replicate the viral genome. During genome replication, the VPg-RNA linkage is removed by the host TDP2, thereby accelerating replication. During the late stage of the replication cycle, host TDP2 is excluded from sites of viral RNA synthesis and encapsidation, allowing for the generation of progeny virions. Its function is as follows. Involved in the viral replication complex and viral polypeptide maturation. It exhibits protease activity with a specificity and catalytic efficiency that is different from protease 3C. Protein 3CD lacks polymerase activity. Protein 3CD binds to the 5'UTR of the viral genome. Functionally, major viral protease that mediates proteolytic processing of the polyprotein. Cleaves host EIF5B, contributing to host translation shutoff. Also cleaves host PABPC1, contributing to host translation shutoff. Cleaves host RIGI and thus contributes to the inhibition of type I interferon production. Cleaves host NLRP1, triggers host N-glycine-mediated degradation of the autoinhibitory NLRP1 N-terminal fragment. Inhibits the integrated stress response (ISR) in the infected cell by cleaving host G3BP1. Stress granule formation is thus inhibited, which allows protein synthesis and viral replication. Replicates the viral genomic RNA on the surface of intracellular membranes. May form linear arrays of subunits that propagate along a strong head-to-tail interaction called interface-I. Covalently attaches UMP to a tyrosine of VPg, which is used to prime RNA synthesis. The positive stranded RNA genome is first replicated at virus induced membranous vesicles, creating a dsRNA genomic replication form. This dsRNA is then used as template to synthesize positive stranded RNA genomes. ss(+)RNA genomes are either translated, replicated or encapsidated. In Homo sapiens (Human), this protein is Genome polyprotein.